The following is a 631-amino-acid chain: uncharacterized protein (631 aa).

9 helical membrane-spanning segments follow: residues 42–62 (VLVGALAGHTDYGLIASIGGF), 76–96 (ALKLLLVSIGIALSFGLGTLL), 106–128 (VLGLIGAAAMFIFSALGIQGPAP), 152–172 (AGLTFLGGIFAMGIALIGWLW), 344–364 (ALKYGIVLFAADMFALAFGFA), 366–386 (SYWIPLSAAAVMLGTTVVFTL), 398–418 (IGVILAGAILFFKPGGVYIAF), 429–449 (MLIVRNYALAVPFLTANALVI), and 464–484 (IARLTDVAVGSVIGLLGTMLL).

The protein belongs to the YccS/YhfK family.

It localises to the cell membrane. This is an uncharacterized protein from Bacillus subtilis (strain 168).